A 235-amino-acid chain; its full sequence is uncharacterized protein (235 aa).

Disordered regions lie at residues 1 to 36 and 213 to 235; these read MGML…GRGS and VKTR…ILEQ.

This is an uncharacterized protein from Homo sapiens (Human).